A 421-amino-acid polypeptide reads, in one-letter code: Thymidine phosphorylase (421 aa).

The protein belongs to the thymidine/pyrimidine-nucleoside phosphorylase family. Homodimer.

It catalyses the reaction thymidine + phosphate = 2-deoxy-alpha-D-ribose 1-phosphate + thymine. The enzymes which catalyze the reversible phosphorolysis of pyrimidine nucleosides are involved in the degradation of these compounds and in their utilization as carbon and energy sources, or in the rescue of pyrimidine bases for nucleotide synthesis. The polypeptide is Thymidine phosphorylase (deoA) (Mycoplasma pneumoniae (strain ATCC 29342 / M129 / Subtype 1) (Mycoplasmoides pneumoniae)).